Reading from the N-terminus, the 469-residue chain is Soluble pyridine nucleotide transhydrogenase (469 aa).

39 to 48 (ERENSVGGGC) contributes to the FAD binding site.

Belongs to the class-I pyridine nucleotide-disulfide oxidoreductase family. FAD is required as a cofactor.

The protein localises to the cytoplasm. It carries out the reaction NAD(+) + NADPH = NADH + NADP(+). Its function is as follows. Conversion of NADPH, generated by peripheral catabolic pathways, to NADH, which can enter the respiratory chain for energy generation. This Photobacterium profundum (strain SS9) protein is Soluble pyridine nucleotide transhydrogenase.